A 2238-amino-acid polypeptide reads, in one-letter code: Golgin subfamily A member 4 (2238 aa).

Positions 1–90 are disordered; the sequence is MFKKLKQKIS…QTFAQKLQLR (90 aa). Phosphoserine is present on Ser-10. Residues 12–41 show a composition bias toward low complexity; the sequence is EQQQLQQALAPAQASSSSSTPTRTRSRTSS. Position 39 is a phosphothreonine (Thr-39). Phosphoserine is present on Ser-41. Composition is skewed to polar residues over residues 52-62 and 73-85; these read NRENASTQATK and SPSQSGDTQTFAQ. Ser-93 and Ser-100 each carry phosphoserine. 3 disordered regions span residues 132 to 154, 1695 to 1744, and 1770 to 1789; these read AAAFDPPSDMESEAEDAPWNSDG, LKER…SQDC, and LEQGEGEARPSQPEAQHRAL. The tract at residues 154-224 is interaction with MACF1; sequence GLSREQLLQR…EELQMDQQAK (71 aa). Residues 156–2161 adopt a coiled-coil conformation; the sequence is SREQLLQRLR…RYEKNACAAT (2006 aa). Residues 1695-1711 are compositionally biased toward basic and acidic residues; it reads LKEREKQVHSLEDKLKN. A GRIP domain is found at 2178 to 2225; the sequence is LFGEPTEFEYLRKVMFEYMMGRETKTMAKVITTVLKFPDDQAQKILER.

In terms of assembly, homodimer. Interacts with GTP-bound ARL1 and ARL3. Interacts with MACF1. Directly interacts with TBC1D23. Interacts with FAM91A1; this interaction may be mediated by TBC1D23. As to expression, ubiquitous. Highly expressed in oligodendrocyte precursors, particularly at a stage just prior to myelination.

It localises to the cytoplasm. It is found in the golgi apparatus membrane. The protein resides in the golgi apparatus. The protein localises to the trans-Golgi network membrane. Its function is as follows. Involved in vesicular trafficking at the Golgi apparatus level. May play a role in delivery of transport vesicles containing GPI-linked proteins from the trans-Golgi network through its interaction with MACF1. Involved in endosome-to-Golgi trafficking. This chain is Golgin subfamily A member 4 (Golga4), found in Mus musculus (Mouse).